The primary structure comprises 524 residues: Bifunctional methyltransferase (524 aa).

The segment at 1 to 306 (MQCSIKQILS…GHSRVILFSP (306 aa)) is hemK. The RF MTase stretch occupies residues 1 to 308 (MQCSIKQILS…SRVILFSPIN (308 aa)). S-adenosyl-L-methionine-binding positions include 146-150 (GTGSG), aspartate 169, tryptophan 198, asparagine 213, glutamate 353, glutamate 378, asparagine 405, and aspartate 427. Position 213 to 216 (213 to 216 (NPPY)) interacts with substrate. A tRNA (guanine-N(7)-)-methyltransferase region spans residues 307–524 (INLNRSYARR…MILRHVLGDH (218 aa)). The tract at residues 311–524 (RSYARRIGKS…MILRHVLGDH (214 aa)) is tRNA MTase. The active site involves aspartate 427. The substrate site is built by lysine 431 and aspartate 463.

The protein in the C-terminal section; belongs to the class I-like SAM-binding methyltransferase superfamily. TrmB family. It in the N-terminal section; belongs to the protein N5-glutamine methyltransferase family. PrmC subfamily.

It catalyses the reaction L-glutaminyl-[peptide chain release factor] + S-adenosyl-L-methionine = N(5)-methyl-L-glutaminyl-[peptide chain release factor] + S-adenosyl-L-homocysteine + H(+). The catalysed reaction is guanosine(46) in tRNA + S-adenosyl-L-methionine = N(7)-methylguanosine(46) in tRNA + S-adenosyl-L-homocysteine. Functionally, methylates the class 1 translation termination release factors RF1/PrfA and RF2/PrfB on the glutamine residue of the universally conserved GGQ motif. Catalyzes the formation of N(7)-methylguanine at position 46 (m7G46) in tRNA. The chain is Bifunctional methyltransferase (prmC/trmB) from Rickettsia conorii (strain ATCC VR-613 / Malish 7).